We begin with the raw amino-acid sequence, 551 residues long: Eukaryotic translation initiation factor 3 subunit D-2 (551 aa).

The segment at 91–154 (TKPYQRGRYR…RNTQNMGRRF (64 aa)) is disordered. Residues 95 to 113 (QRGRYRPNMRNNVRSRGRT) are compositionally biased toward basic residues. Positions 121–136 (ASLGGSTAGGATASTT) are enriched in low complexity. Residues 290 to 304 (QFDLLTVNETSVEPP) are RNA gate. The segment at 527–551 (PENAFDSDGDEEEESSDPLSNSNDN) is disordered. Over residues 531–542 (FDSDGDEEEESS) the composition is skewed to acidic residues.

It belongs to the eIF-3 subunit D family. Component of the eukaryotic translation initiation factor 3 (eIF-3) complex. The eIF-3 complex interacts with pix.

The protein resides in the cytoplasm. Functionally, mRNA cap-binding component of the eukaryotic translation initiation factor 3 (eIF-3) complex, which is involved in protein synthesis of a specialized repertoire of mRNAs and, together with other initiation factors, stimulates binding of mRNA and methionyl-tRNAi to the 40S ribosome. The eIF-3 complex specifically targets and initiates translation of a subset of mRNAs involved in cell proliferation. In the eIF-3 complex, eif3d specifically recognizes and binds the 7-methylguanosine cap of a subset of mRNAs. The sequence is that of Eukaryotic translation initiation factor 3 subunit D-2 from Drosophila melanogaster (Fruit fly).